The chain runs to 419 residues: Effector protein BipC (419 aa).

2 disordered regions span residues 62-91 and 338-402; these read VAGS…TVSG and LQSG…AKSQ. Basic and acidic residues-rich tracts occupy residues 71–91 and 380–392; these read ELAR…TVSG and TRDE…REAA.

This sequence belongs to the SctB/SipC family.

The protein localises to the secreted. The chain is Effector protein BipC (bipC) from Burkholderia pseudomallei (strain 1106a).